The following is a 594-amino-acid chain: MIQKLGAKGIKSDERNQREWDDGSEHDDVTKIYVRGGREGIRSIYFNYVKNGKPKDGSIHGYFDSGFTQTFEINHLRGEYLESVDAYYDKKSYGMQAIQFKTNFRTSELMGYSYECTMFTLAVQGKKIIGFHGSNYVHILSLGAYFISIAPTRLEVKGSKGSKKWDDGFDHENVSKIEVLGGFEGILYIKVDYIKNGKLETGLVHGHSGGDGFLQKMEINQSKNEYLVYVEGYYDDASETIQGLHFQTNLNNPVMMGYKKGRKFLLASNGNKIIGFHGYADKSLNSLGAYFSTTTPNKLECQGDRKGLPWDDGCNYDGVKKVYVDSISDIDSVRFEYDNGGKVEKTPYRRDVTNEKEFVLDYPNEFITSVEGTLATPTNFDITWILSLTFKTSKGRTSPTFGSSSPGRKFVLEKNGSALVGFHGYIGPGYNIKALGAYYRPIPPTPDVKRLEAQGGDGGASWDDGGTFNSVRKIYIGLGKNVVGFVKFLYYKNARVVIGDDHGNKTLSSDLLEFLLDPFEHIISVEGTYDDTSGGITMLRFETNLQKSPYFGFGTTSNFLLHKDNHQIVGFHGKSSNMLHQLGVHVIPNGFKFI.

Positions 1–23 are disordered; it reads MIQKLGAKGIKSDERNQREWDDG. Jacalin-type lectin domains lie at 2 to 148, 151 to 293, 296 to 441, and 448 to 588; these read IQKL…YFIS, PTRL…YFST, PNKL…YYRP, and VKRL…HVIP. Basic and acidic residues predominate over residues 10 to 23; the sequence is IKSDERNQREWDDG.

This sequence belongs to the jacalin lectin family.

The chain is Jacalin-related lectin 44 (JAL44) from Arabidopsis thaliana (Mouse-ear cress).